The sequence spans 620 residues: Glutathione-regulated potassium-efflux system protein KefC (620 aa).

The Periplasmic segment spans residues 1–3 (MDS). Residues 4-24 (HTLLQALIYLGSAALIVPIAV) traverse the membrane as a helical segment. Position 25 (Arg25) is a topological domain, cytoplasmic. The chain crosses the membrane as a helical span at residues 26–46 (LGLGSVLGYLIAGCIIGPWGL). At 47–53 (RLVTDAE) the chain is on the periplasmic side. Residues 54–74 (SILHFAEIGVVLMLFVIGLEL) form a helical membrane-spanning segment. Residues 75–89 (DPQRLWKLRASVFGG) lie on the Cytoplasmic side of the membrane. A helical transmembrane segment spans residues 90–110 (GALQMGVCGGLIGLFCMFLGL). Over 111–113 (RWQ) the chain is Periplasmic. The helical transmembrane segment at 114–134 (VAELIGMTLALSSTAIAMQAM) threads the bilayer. Topologically, residues 135-148 (NERNLTVSQVGRSA) are cytoplasmic. Residues 149-169 (FAVLLFQDIAAIPLVAMIPLL) form a helical membrane-spanning segment. Topologically, residues 170 to 177 (AASGASTT) are periplasmic. A helical membrane pass occupies residues 178-198 (LGAFALSALKVAGALALVVLL). At 199–213 (GRYVTRPALRFVARS) the chain is on the cytoplasmic side. A helical membrane pass occupies residues 214-233 (GLREVFSAVALFLVFGFGLL). At 234–236 (LEE) the chain is on the periplasmic side. The helical transmembrane segment at 237–254 (VGLSMAMGAFLAGVLLAS) threads the bilayer. The Cytoplasmic portion of the chain corresponds to 255 to 269 (SEYRHALESDIEPFK). Residues 270-290 (GLLLGLFFIGVGMSIDFGTLV) form a helical membrane-spanning segment. Residues 291–293 (ENP) lie on the Periplasmic side of the membrane. Residues 294–314 (LRILLLLAGFLAIKIVMLWLV) form a helical membrane-spanning segment. Topologically, residues 315–326 (ARPLGVPAKQRR) are cytoplasmic. The chain crosses the membrane as a helical span at residues 327–347 (WFAVLLGQGSEFAFVVFGAAQ). The Periplasmic portion of the chain corresponds to 348–358 (MADVLEPEWAK). The helical transmembrane segment at 359–379 (ALTLAVALSMAATPIFLVLLT) threads the bilayer. At 380–620 (RMEKTATGEA…ADEPEVKPSI (241 aa)) the chain is on the cytoplasmic side. Residues 399 to 518 (QPRVIVAGFG…AGVAMPERET (120 aa)) enclose the RCK N-terminal domain. A disordered region spans residues 599 to 620 (QGTAEGKHSGEVADEPEVKPSI).

The protein belongs to the monovalent cation:proton antiporter 2 (CPA2) transporter (TC 2.A.37) family. KefC subfamily. Homodimer. Interacts with the regulatory subunit KefF.

The protein localises to the cell inner membrane. Functionally, pore-forming subunit of a potassium efflux system that confers protection against electrophiles. Catalyzes K(+)/H(+) antiport. This is Glutathione-regulated potassium-efflux system protein KefC from Salmonella typhimurium (strain LT2 / SGSC1412 / ATCC 700720).